A 407-amino-acid chain; its full sequence is Protoasukamycin 4-monooxygenase (407 aa).

As to quaternary structure, does not interact with AsuE2, suggesting a possible transient interaction between the two enzymes instead of formation of a stable complex. It depends on FMN as a cofactor. The cofactor is FAD. Riboflavin is required as a cofactor.

It catalyses the reaction protoasukamycin + NADH + O2 + H(+) = 4-hydroxyprotoasukamycin + NAD(+) + H2O. Its pathway is antibiotic biosynthesis. With respect to regulation, when flavin concentration is low, activity is enhanced by the presence of the NADH-dependent flavin reductase AsuE2. In the presence of abundant flavin, activity of AsuE1 is not affected by AsuE2. In terms of biological role, involved in the biosynthesis of the antibiotic asukamycin. Catalyzes the conversion of protoasukamycin to 4-hydroxyprotoasukamycin. Can also convert some protoasukamycin derivatives into their corresponding 4-hydroxyprotoasukamycin derivatives. Can also use NADPH, but catalytic efficiency is 50-fold higher with NADH. The polypeptide is Protoasukamycin 4-monooxygenase (Streptomyces nodosus subsp. asukaensis).